The sequence spans 559 residues: Glypican-1 (559 aa).

Residues Met-1–Gly-23 form the signal peptide. 7 disulfide bridges follow: Cys-32–Cys-68, Cys-62–Cys-256, Cys-69–Cys-259, Cys-191–Cys-343, Cys-246–Cys-279, Cys-268–Cys-415, and Cys-272–Cys-401. N-linked (GlcNAc...) asparagine glycosylation is found at Asn-79 and Asn-116. The interval Phe-478–Ala-539 is disordered. Ser-486, Ser-488, and Ser-490 each carry an O-linked (Xyl...) (heparan sulfate) serine glycan. A lipid anchor (GPI-anchor amidated serine) is attached at Ser-530. A propeptide spans Ala-531 to Arg-559 (removed in mature form).

It belongs to the glypican family. S-nitrosylated in a Cu(2+)-dependent manner. Nitric acid (NO) is released from the nitrosylated cysteines by ascorbate or by some other reducing agent, in a Cu(2+) or Zn(2+) dependent manner. This free nitric oxide is then capable of cleaving the heparan sulfate side chains. Post-translationally, N- and O-glycosylated. N-glycosylation is mainly of the complex type containing sialic acid. O-glycosylated with heparan sulfate. The heparan sulfate chains can be cleaved either by the action of heparanase or, degraded by a deaminative process that uses nitric oxide (NO) released from the S-nitrosylated cysteines. This process is triggered by ascorbate, or by some other reducing agent, in a Cu(2+)- or Zn(2+) dependent manner. Cu(2+) ions are provided by ceruloproteins such as APP, PRNP or CP which associate with GCP1 in intracellular compartments or lipid rafts. In terms of processing, shed from the cell surface probably by further cleavage.

It localises to the cell membrane. It is found in the endosome. The protein localises to the secreted. The protein resides in the extracellular space. In terms of biological role, cell surface proteoglycan that bears heparan sulfate. Binds, via the heparan sulfate side chains, alpha-4 (V) collagen and participates in Schwann cell myelination. May act as a catalyst in increasing the rate of conversion of prion protein PRPN (C) to PRNP (Sc) via associating (via the heparan sulfate side chains) with both forms of PRPN, targeting them to lipid rafts and facilitating their interaction. Required for proper skeletal muscle differentiation by sequestering FGF2 in lipid rafts preventing its binding to receptors (FGFRs) and inhibiting the FGF-mediated signaling. The protein is Glypican-1 (GPC1) of Bos taurus (Bovine).